Reading from the N-terminus, the 444-residue chain is Phosphoglucosamine mutase (444 aa).

The Phosphoserine intermediate role is filled by S102. Residues S102, D241, D243, and D245 each coordinate Mg(2+). S102 carries the phosphoserine modification.

This sequence belongs to the phosphohexose mutase family. The cofactor is Mg(2+). In terms of processing, activated by phosphorylation.

It catalyses the reaction alpha-D-glucosamine 1-phosphate = D-glucosamine 6-phosphate. In terms of biological role, catalyzes the conversion of glucosamine-6-phosphate to glucosamine-1-phosphate. The polypeptide is Phosphoglucosamine mutase (Buchnera aphidicola subsp. Acyrthosiphon pisum (strain 5A)).